The chain runs to 682 residues: Two-component system protein A (682 aa).

The disordered stretch occupies residues 11–41; that stretch reads SLDDNDNGQQHQDEVQAKHQDQGHTCPSRPS. Positions 21-32 are enriched in basic and acidic residues; that stretch reads HQDEVQAKHQDQ. PAS domains lie at 45-105 and 166-239; these read LSRI…PILY and MNET…LREG. In terms of domain architecture, PAC spans 241–292; the sequence is IEDEGWRYRRDGSRFWANVLITPIYQFGQHVGFVKVTRDLTERKEAEACMIA. The Histidine kinase domain occupies 307–530; that stretch reads NISHEIRTPM…VFWFTAKMGG (224 aa). H310 carries the phosphohistidine; by autocatalysis modification. The Response regulatory domain maps to 563–680; sequence HVLLVEDNIV…QLLRVLWKWF (118 aa). At D615 the chain carries 4-aspartylphosphate.

Activation probably requires a transfer of a phosphate group between a His in the histidine kinase domain and an Asp of the response regulatory domain.

It localises to the cytoplasm. The enzyme catalyses ATP + protein L-histidine = ADP + protein N-phospho-L-histidine.. Functionally, may be part of a two-component regulatory system required for formation of conidia on certain growth media. The protein is Two-component system protein A of Emericella nidulans (strain FGSC A4 / ATCC 38163 / CBS 112.46 / NRRL 194 / M139) (Aspergillus nidulans).